Here is a 141-residue protein sequence, read N- to C-terminus: Hemoglobin subunit alpha-1 (141 aa).

Positions 1–141 (VLTEDDKNHI…VAKTLVAHYR (141 aa)) constitute a Globin domain. His-58 contributes to the O2 binding site. His-87 is a heme b binding site.

It belongs to the globin family. As to quaternary structure, heterotetramer of two alpha chains and two beta chains. Red blood cells.

In terms of biological role, involved in oxygen transport from the lung to the various peripheral tissues. The sequence is that of Hemoglobin subunit alpha-1 from Iguana iguana (Common iguana).